The following is a 312-amino-acid chain: Malate dehydrogenase (312 aa).

Residues 7–13 (GAAGGIG) and D34 contribute to the NAD(+) site. Residues R81 and R87 each contribute to the substrate site. NAD(+) contacts are provided by residues N94 and 117-119 (ITN). Positions 119 and 153 each coordinate substrate. Residue H177 is the Proton acceptor of the active site. Position 227 (M227) interacts with NAD(+).

This sequence belongs to the LDH/MDH superfamily. MDH type 1 family. As to quaternary structure, homodimer.

The enzyme catalyses (S)-malate + NAD(+) = oxaloacetate + NADH + H(+). Functionally, catalyzes the reversible oxidation of malate to oxaloacetate. This Escherichia coli O17:K52:H18 (strain UMN026 / ExPEC) protein is Malate dehydrogenase.